Here is a 164-residue protein sequence, read N- to C-terminus: Axial regulator YABBY 5 (164 aa).

The segment at 16 to 43 (CNFCNIILAVNVPCSSLFDIVTVRCGHC) adopts a C4-type zinc-finger fold.

The protein belongs to the YABBY family. Binds to LUG and LUH; these complexes promote adaxial cell identity in leaves as well as embryonic shoot apical meristem (SAM) initiation and postembryonic SAM maintenance. Interacts with SPL/NZZ and SPEAR2.

Its subcellular location is the nucleus. Its function is as follows. Promotes adaxial cell identity. Regulates the initiation of embryonic shoot apical meristem (SAM) development. The protein is Axial regulator YABBY 5 (YAB5) of Arabidopsis thaliana (Mouse-ear cress).